A 109-amino-acid polypeptide reads, in one-letter code: MTDLEFMDRAEKLLLAVEQSCDRINDTTDADLDGQRTGGMVTITFRNRSQIVINLQKPLHEIWMAAQSGGYHFRHDGTAWMDTKGAGEFFAALSHNATLQAGEALQFTD.

The protein belongs to the frataxin family.

Its function is as follows. Involved in iron-sulfur (Fe-S) cluster assembly. May act as a regulator of Fe-S biogenesis. In Acidovorax ebreus (strain TPSY) (Diaphorobacter sp. (strain TPSY)), this protein is Iron-sulfur cluster assembly protein CyaY.